We begin with the raw amino-acid sequence, 577 residues long: Arginine--tRNA ligase (577 aa).

The 'HIGH' region motif lies at 122–132; sequence PNVAKEMHVGH.

The protein belongs to the class-I aminoacyl-tRNA synthetase family. As to quaternary structure, monomer.

The protein resides in the cytoplasm. The enzyme catalyses tRNA(Arg) + L-arginine + ATP = L-arginyl-tRNA(Arg) + AMP + diphosphate. The polypeptide is Arginine--tRNA ligase (Salmonella dublin (strain CT_02021853)).